The sequence spans 285 residues: Nucleotide-binding protein FMG_1084 (285 aa).

8-15 (GMSGAGKS) serves as a coordination point for ATP. Residue 59-62 (DIRG) coordinates GTP.

This sequence belongs to the RapZ-like family.

Its function is as follows. Displays ATPase and GTPase activities. The sequence is that of Nucleotide-binding protein FMG_1084 from Finegoldia magna (strain ATCC 29328 / DSM 20472 / WAL 2508) (Peptostreptococcus magnus).